The sequence spans 91 residues: RNA-binding protein Hfq (91 aa).

In terms of domain architecture, Sm spans 9–68 (DPFLNALRRERVPVSVYLVNGIKLQGTIESFDQFVVLLRNTVSQMVYKHAISTVVPARNV).

Belongs to the Hfq family. In terms of assembly, homohexamer.

RNA chaperone that binds small regulatory RNA (sRNAs) and mRNAs to facilitate mRNA translational regulation in response to envelope stress, environmental stress and changes in metabolite concentrations. Also binds with high specificity to tRNAs. This is RNA-binding protein Hfq from Stenotrophomonas maltophilia (strain K279a).